The following is a 235-amino-acid chain: Phosphoribosylaminoimidazole-succinocarboxamide synthase (235 aa).

This sequence belongs to the SAICAR synthetase family.

The catalysed reaction is 5-amino-1-(5-phospho-D-ribosyl)imidazole-4-carboxylate + L-aspartate + ATP = (2S)-2-[5-amino-1-(5-phospho-beta-D-ribosyl)imidazole-4-carboxamido]succinate + ADP + phosphate + 2 H(+). Its pathway is purine metabolism; IMP biosynthesis via de novo pathway; 5-amino-1-(5-phospho-D-ribosyl)imidazole-4-carboxamide from 5-amino-1-(5-phospho-D-ribosyl)imidazole-4-carboxylate: step 1/2. In Streptococcus pneumoniae serotype 19F (strain G54), this protein is Phosphoribosylaminoimidazole-succinocarboxamide synthase.